We begin with the raw amino-acid sequence, 610 residues long: ABC transporter ATP-binding protein ARB1 (610 aa).

The disordered stretch occupies residues 1–43 (MPPVSASKAKRDAKKAEREAKKAAAGKTIRKLGRKKEAAAEES). 2 positions are modified to phosphoserine: Ser43 and Ser65. 2 consecutive ABC transporter domains span residues 82 to 323 (IKLS…TNQM) and 393 to 610 (LAFD…NVVL). 114–121 (GENGCGKS) contacts ATP. Position 196 is a phosphoserine (Ser196). An ATP-binding site is contributed by 428–435 (GPNGVGKS). Position 446 is a phosphothreonine (Thr446).

Belongs to the ABC transporter superfamily. ABCF family. EF3 subfamily. In terms of assembly, interacts with LSG1.

Its subcellular location is the cytoplasm. The protein resides in the nucleus. The enzyme catalyses ATP + H2O = ADP + phosphate + H(+). In terms of biological role, ATPase that stimulates 40S and 60S ribosome biogenesis. Also involved in ribosome-associated quality control (RQC) pathway, a pathway that mediates ubiquitination and extraction of incompletely synthesized nascent chains for proteasomal degradation: localizes to the ribosomal E-site and stimulates VMS1-dependent tRNA cleavage. The sequence is that of ABC transporter ATP-binding protein ARB1 (ARB1) from Saccharomyces cerevisiae (strain ATCC 204508 / S288c) (Baker's yeast).